Here is a 678-residue protein sequence, read N- to C-terminus: SPS-sensor component PTR3 (678 aa).

Disordered stretches follow at residues 111–158 (TGQG…SDPT) and 179–211 (ANTE…SSLL). Positions 127-144 (TSPSSSSLSLTPSRSSST) are enriched in low complexity. Positions 149–158 (ADNKTLSDPT) are enriched in basic and acidic residues. The span at 179 to 194 (ANTEVGSDHPLTTGTT) shows a compositional bias: polar residues.

Homodimer. Component of the plasma membrane SPS (SSY1-PTR3-SSY5) amino acid sensor complex. Interacts directly with SSY1 and SSY5. Post-translationally, hyperphosphorylated in response to extracellular amino acids and dependent on the amino acid sensor component SSY1. Phosphorylation is positively regulated by casein kinases YCK1 and YCK2, and negatively regulated by phosphatase PP2A regulatory subunit RTS1.

Its subcellular location is the cell membrane. Component of the SPS-sensor system, which regulates the expression of several amino acid-metabolizing enzymes and amino acid- and peptide-permeases in response to extracellular amino acid levels by controlling the activity of two transcription factors, STP1 and STP2. This Saccharomyces cerevisiae (strain ATCC 204508 / S288c) (Baker's yeast) protein is SPS-sensor component PTR3 (PTR3).